Here is a 923-residue protein sequence, read N- to C-terminus: Periodic tryptophan protein 2 (923 aa).

WD repeat units follow at residues 12–52 (GTVY…TFEY), 53–93 (EHRK…LHHF), 94–132 (NFKEKCSAVKFSPDGRLFALASGRFLQIWKTPDVNKDRQ), 144–183 (GHFQDITSLTWSQDSRFILTTSKDLSAKIWSVDSEEKNLA), and 189–228 (GHRDYVMGAFFSHDQEKIYTVSKDGAVFVWEFTKRPSDDD). Phosphoserine occurs at positions 225 and 232. 8 WD repeats span residues 258-297 (ANQAKVKCVTFHPATRLLAVGFTSGEFRLYDLPDFTLIQQ), 300-340 (MGQN…YILK), 343-382 (GHFDSTNSLAYSPDGSRVVTASEDGKIKVWDITSGFCLAT), 385-424 (EHTSSVTAVQFAKRGQVMFSSSLDGTVRAWDLIRYRNFRT), 428-470 (TERI…DALS), 471-510 (GHEGPVSCLSFSQENSVLASASWDKTIRIWSIFGRSQQVE), 513-552 (EVYSDVLALSMRPDGKEVAVSTLKGQISIFNIEDAKQVGN), and 575-614 (ERSKFFTTIHYSFDGMAIVAGGNNNSICLYDVPNEVLLKR). A phosphoserine mark is found at serine 651 and serine 664. The disordered stretch occupies residues 653–674 (LEDRIDNSLPGSQRGGDLSTRK). A WD 14 repeat occupies 676 to 714 (RPEVRVTSVQFSPTANAFAAASTEGLLIYSTNDTILFDP). Acidic residues-rich tracts occupy residues 869–893 (KDDADEDNEENEENDVVMESDDEEG) and 911–923 (DSSDEEENEKELP). The interval 869 to 923 (KDDADEDNEENEENDVVMESDDEEGWIGFNGKDNKLPLSNENDSSDEEENEKELP) is disordered. Phosphoserine is present on residues serine 912 and serine 913.

The protein belongs to the WD repeat PWP2 family. In terms of assembly, interacts with snoRNA U3. Interacts with MPP10. Component of the ribosomal small subunit (SSU) processome composed of at least 40 protein subunits and snoRNA U3.

The protein localises to the nucleus. Its subcellular location is the nucleolus. Functionally, required for bud-site selection and cell separation. Also involved in nucleolar processing of pre-18S ribosomal RNA. In Saccharomyces cerevisiae (strain ATCC 204508 / S288c) (Baker's yeast), this protein is Periodic tryptophan protein 2 (PWP2).